The sequence spans 198 residues: Putative Do-like 15 protein (198 aa).

A serine protease region spans residues 48–198; sequence KIFSFSREPN…VFENDSPSDK (151 aa). Catalysis depends on charge relay system residues H86 and S175.

It belongs to the peptidase S1B family.

The chain is Putative Do-like 15 protein (DEGP15) from Arabidopsis thaliana (Mouse-ear cress).